A 502-amino-acid polypeptide reads, in one-letter code: 4,4'-diapophytoene desaturase (4,4'-diaponeurosporene-forming) (502 aa).

5–17 provides a ligand contact to FAD; sequence VIGAGVTGLAAAA.

Belongs to the carotenoid/retinoid oxidoreductase family. CrtN subfamily.

The catalysed reaction is 15-cis-4,4'-diapophytoene + 3 FAD + 3 H(+) = all-trans-4,4'-diaponeurosporene + 3 FADH2. Its pathway is carotenoid biosynthesis; staphyloxanthin biosynthesis; staphyloxanthin from farnesyl diphosphate: step 2/5. In terms of biological role, involved in the biosynthesis of the yellow-orange carotenoid staphyloxanthin, which plays a role in the virulence via its protective function against oxidative stress. Catalyzes three successive dehydrogenation reactions that lead to the introduction of three double bonds into 4,4'-diapophytoene (dehydrosqualene), with 4,4'-diapophytofluene and 4,4'-diapo-zeta-carotene as intermediates, and 4,4'-diaponeurosporene (the major deep-yellow pigment in staphylococci strains) as the end product. The polypeptide is 4,4'-diapophytoene desaturase (4,4'-diaponeurosporene-forming) (Staphylococcus aureus (strain MRSA252)).